The chain runs to 407 residues: MQPALTTAIPARKFKLTLLGPAFIAAIGYIDPGNFATNIQAGSTFGYQLLWVVVWANLMAMLVQTLSAKLGIVTGKNLAEHIRDRLPKPAVWAYWVQAEIIAMATDLAEFIGAAVGFKLLLGVTLLEGAGITAVVTWGILMLQSRGQKPLEFVVGGLLLFVAAAYIVELVFSRPHLPSLLEGALFPGLPNSDAVYLAAGVLGATVMPHVIYLHSALTQHTQDQGSVPQRLHTTRVDVAIAMTIAGFVNLAMMAMAAAAFHSSGNQQVAELESAYQTLTPLLGQAAATLFGLSLVASGISSTVVGTLAGQVVMQGFVRFTIPLWLRRAITMAPAFVVIAMGLNTTEILVLSQVVLSFGIALALIPLLILTGDRALMGEYRNHPVTQAVGRLIVALVIGLNAYLLVAMI.

Transmembrane regions (helical) follow at residues 16 to 36 (LTLLGPAFIAAIGYIDPGNFA), 43 to 63 (STFGYQLLWVVVWANLMAMLV), 95 to 115 (WVQAEIIAMATDLAEFIGAAV), 119 to 139 (LLLGVTLLEGAGITAVVTWGI), 152 to 172 (FVVGGLLLFVAAAYIVELVFS), 193 to 213 (AVYLAAGVLGATVMPHVIYLH), 239 to 259 (IAMTIAGFVNLAMMAMAAAAF), 288 to 308 (LFGLSLVASGISSTVVGTLAG), 318 to 338 (FTIPLWLRRAITMAPAFVVIA), 346 to 366 (ILVLSQVVLSFGIALALIPLL), and 387 to 407 (VGRLIVALVIGLNAYLLVAMI).

It belongs to the NRAMP family.

Its subcellular location is the cell inner membrane. Functionally, h(+)-stimulated, divalent metal cation uptake system. This is Divalent metal cation transporter MntH from Aeromonas hydrophila subsp. hydrophila (strain ATCC 7966 / DSM 30187 / BCRC 13018 / CCUG 14551 / JCM 1027 / KCTC 2358 / NCIMB 9240 / NCTC 8049).